The chain runs to 362 residues: S-adenosylmethionine-dependent nucleotide dehydratase RSAD2 (362 aa).

A disordered region spans residues 49–71 (QQLQGKTEAGEPPRAQEDSHLPT). Basic and acidic residues predominate over residues 56-68 (EAGEPPRAQEDSH). The Radical SAM core domain occupies 70 to 290 (PTTPTSVNYH…LDRHKDVSCL (221 aa)). Residues cysteine 84, cysteine 88, and cysteine 91 each coordinate [4Fe-4S] cluster. Residue lysine 198 is modified to N6-acetyllysine. Lysine 207 is covalently cross-linked (Glycyl lysine isopeptide (Lys-Gly) (interchain with G-Cter in ubiquitin)).

Belongs to the radical SAM superfamily. RSAD2 family. Homodimer. Interacts with IRAK1 and TRAF6. Interacts with FPPS. Interacts with HADHB. Interacts (via C-terminus) with VAPA/VAP33 (via C-terminus). [4Fe-4S] cluster serves as cofactor. Acetylated by HAT1. HAT1-mediated acetylation of Lys-198 in turn recruits UBE4A that stimulates RSAD2 polyubiquitination leading to proteasomal degradation. Post-translationally, 'Lys-6'-linked polyubiquitination at Lys-207 leads to RSAD2 protein degradation.

Its subcellular location is the endoplasmic reticulum membrane. The protein resides in the golgi apparatus. It localises to the endoplasmic reticulum. The protein localises to the lipid droplet. It is found in the mitochondrion. Its subcellular location is the mitochondrion inner membrane. The protein resides in the mitochondrion outer membrane. The catalysed reaction is CTP + AH2 + S-adenosyl-L-methionine = 3'-deoxy-3',4'-didehydro-CTP + 5'-deoxyadenosine + L-methionine + A + H2O + H(+). Its activity is regulated as follows. IRAK1 and TRAF6 synergistically activate RSAD2 increasing its activity with CTP as substrate about 10-fold. Interferon-inducible antiviral protein which plays a major role in the cell antiviral state induced by type I and type II interferon. Catalyzes the conversion of cytidine triphosphate (CTP) to 3'-deoxy-3',4'-didehydro-CTP (ddhCTP) via a SAM-dependent radical mechanism. In turn, ddhCTP acts as a chain terminator for the RNA-dependent RNA polymerases from multiple viruses and directly inhibits viral replication. Therefore, inhibits a wide range of DNA and RNA viruses. Also promotes TLR7 and TLR9-dependent production of IFN-beta production in plasmacytoid dendritic cells (pDCs) by facilitating 'Lys-63'-linked ubiquitination of IRAK1 by TRAF6. Plays a role in CD4+ T-cells activation and differentiation. Facilitates T-cell receptor (TCR)-mediated GATA3 activation and optimal T-helper 2 (Th2) cytokine production by modulating NFKB1 and JUNB activities. Can inhibit secretion of soluble proteins. This Sus scrofa (Pig) protein is S-adenosylmethionine-dependent nucleotide dehydratase RSAD2.